Consider the following 452-residue polypeptide: Lipase member H (452 aa).

An N-terminal signal peptide occupies residues 1 to 16 (MLRFYLFISLLCLVRS). N-linked (GlcNAc...) asparagine glycosylation is found at N50, N66, and N122. S154 serves as the catalytic Nucleophile. D178 functions as the Charge relay system in the catalytic mechanism. An intrachain disulfide couples C233 to C247. The Charge relay system role is filled by H249. N263 carries an N-linked (GlcNAc...) asparagine glycan. Intrachain disulfides connect C271–C282, C285–C293, and C428–C447.

This sequence belongs to the AB hydrolase superfamily. Lipase family. Interacts with TTMP/C3orf52. Expressed in liver and lacrimal gland.

The protein localises to the secreted. The protein resides in the cell membrane. The enzyme catalyses 1-hexadecanoyl-2-(9Z-octadecenoyl)-sn-glycero-3-phosphate + H2O = 2-(9Z-octadecenoyl)-sn-glycero-3-phosphate + hexadecanoate + H(+). Hydrolyzes specifically phosphatidic acid (PA) to produce 2-acyl lysophosphatidic acid (LPA; a potent bioactive lipid mediator) and fatty acid. Does not hydrolyze other phospholipids, like phosphatidylserine (PS), phosphatidylcholine (PC) and phosphatidylethanolamine (PE) or triacylglycerol (TG). This chain is Lipase member H (LIPH), found in Oryctolagus cuniculus (Rabbit).